Here is a 207-residue protein sequence, read N- to C-terminus: Putative 3-methyladenine DNA glycosylase (207 aa).

Low complexity predominate over residues 182–193 (PAPAGARAARAP). Residues 182 to 207 (PAPAGARAARAPAPAPRPRRPRGSGP) are disordered. The span at 198 to 207 (RPRRPRGSGP) shows a compositional bias: basic residues.

It belongs to the DNA glycosylase MPG family.

This Anaeromyxobacter dehalogenans (strain 2CP-C) protein is Putative 3-methyladenine DNA glycosylase.